The primary structure comprises 160 residues: Probable transcriptional regulator YgiV (160 aa).

Functionally, represses expression of mcbR. The sequence is that of Probable transcriptional regulator YgiV (ygiV) from Escherichia coli (strain K12).